Here is a 1774-residue protein sequence, read N- to C-terminus: U3 small nucleolar RNA-associated protein 10 (1774 aa).

Residues 1209–1228 (TEQGKSDGDESGSEPDNDNP) form a disordered region. The HEAT repeat unit spans residues 1734 to 1772 (LVPVIAELLEDDDEEVEQEVRTGLVKVVETVLGEPFDRY).

The protein belongs to the HEATR1/UTP10 family. Component of the ribosomal small subunit (SSU) processome.

The protein resides in the nucleus. Its subcellular location is the nucleolus. Its function is as follows. Involved in nucleolar processing of pre-18S ribosomal RNA. Involved in ribosome biosynthesis. This chain is U3 small nucleolar RNA-associated protein 10, found in Eremothecium gossypii (strain ATCC 10895 / CBS 109.51 / FGSC 9923 / NRRL Y-1056) (Yeast).